The following is a 171-amino-acid chain: Disulfide bond formation protein B (171 aa).

The Cytoplasmic segment spans residues M1–V8. The helical transmembrane segment at S9–Y25 threads the bilayer. The Periplasmic segment spans residues L26–V43. The cysteines at positions 35 and 38 are disulfide-linked. A helical membrane pass occupies residues G44–P60. Topologically, residues V61–R67 are cytoplasmic. Residues F68–G85 form a helical membrane-spanning segment. The Periplasmic segment spans residues R86–V142. A disulfide bond links C101 and C128. A helical transmembrane segment spans residues W143 to R161. Topologically, residues F162–K171 are cytoplasmic.

This sequence belongs to the DsbB family.

The protein resides in the cell inner membrane. Its function is as follows. Required for disulfide bond formation in some periplasmic proteins. Acts by oxidizing the DsbA protein. This chain is Disulfide bond formation protein B, found in Acinetobacter baumannii (strain ATCC 17978 / DSM 105126 / CIP 53.77 / LMG 1025 / NCDC KC755 / 5377).